We begin with the raw amino-acid sequence, 247 residues long: 2,3-bisphosphoglycerate-dependent phosphoglycerate mutase (247 aa).

Residues 8 to 15 (RHGESQWN), 21 to 22 (TG), arginine 60, 87 to 90 (ERHY), lysine 98, 114 to 115 (RR), and 183 to 184 (GN) contribute to the substrate site. Histidine 9 (tele-phosphohistidine intermediate) is an active-site residue. The active-site Proton donor/acceptor is the glutamate 87.

This sequence belongs to the phosphoglycerate mutase family. BPG-dependent PGAM subfamily.

The enzyme catalyses (2R)-2-phosphoglycerate = (2R)-3-phosphoglycerate. Its pathway is carbohydrate degradation; glycolysis; pyruvate from D-glyceraldehyde 3-phosphate: step 3/5. Functionally, catalyzes the interconversion of 2-phosphoglycerate and 3-phosphoglycerate. The chain is 2,3-bisphosphoglycerate-dependent phosphoglycerate mutase from Chlorobaculum parvum (strain DSM 263 / NCIMB 8327) (Chlorobium vibrioforme subsp. thiosulfatophilum).